Consider the following 378-residue polypeptide: MHPVLQSVRNASVSAGGPHQQQPQQQQHGVSSVRRPPSPPRYPAQHAYPGAGATPTAGRGDFDGALDPDEGPVACGLAAGAGVDEVRMRERDAARRATVPEINLFKARRDVVPNGDYERDLMYHSGQAIDIDRQRVLTPEDFKGSEPAFTPAVNHMRAAELKRAAEQTAFGEELRNTCHQTRIRTALLRPEIGAGIYYLYDFVQTYLEHPDGRVKLNPQLVLVAQHAGNTMLAQRLWAIAEEKNAWLRDLIEMAYMIVNDPYLNTEQQLSAICTTVVELSMKYAKLAAKNGYPSMAQMAKAQEFFYRVMQAVLDLGVQVGVYNNRPARYRQKRMSEIPQMTDAEYMFGLTQALESRPPQGESFADEGPSESDDEDDFI.

2 disordered regions span residues 1 to 73 and 355 to 378; these read MHPV…EGPV and SRPPQGESFADEGPSESDDEDDFI. The interaction with packaging protein 1 stretch occupies residues 1–178; sequence MHPVLQSVRN…AFGEELRNTC (178 aa). Low complexity-rich tracts occupy residues 16-35 and 49-58; these read GGPHQQQPQQQQHGVSSVRR and PGAGATPTAG. Ser362 is modified (phosphoserine; by host). Residues 363–378 are compositionally biased toward acidic residues; that stretch reads FADEGPSESDDEDDFI.

Belongs to the adenoviridae packaging protein 3 family. In terms of assembly, part of the genome packaging complex composed of packaging proteins 1, 2 and 3; this complex specifically binds to the packaging sequence on the left end of viral genomic DNA and performs packaging of the viral genome. Interacts with hexon-linking protein IIIa; this interaction is required to promote correct genome packaging. Cleaved at different sites by the viral protease during virion maturation.

It is found in the host nucleus. In terms of biological role, involved in viral genome packaging through its interaction with packaging proteins 1 and 2. After proteolytic cleavage by adenovirus protease, L1 52/55k protein is removed from the capsid during viral maturation. This Galliformes (FAdV-1) protein is Packaging protein 3.